The following is a 313-amino-acid chain: Pyrimidine-specific ribonucleoside hydrolase RihB (313 aa).

Asp-11 serves as the catalytic Proton acceptor. The Ca(2+) site is built by Asp-11, Asp-16, and Val-124. Substrate is bound by residues Gln-227 and His-239. Ca(2+) is bound at residue Asp-240.

It belongs to the IUNH family. RihB subfamily. As to quaternary structure, homotetramer. Ca(2+) is required as a cofactor.

The enzyme catalyses a pyrimidine ribonucleoside + H2O = a pyrimidine nucleobase + D-ribose. In terms of biological role, hydrolyzes cytidine or uridine to ribose and cytosine or uracil, respectively. Has a clear preference for cytidine over uridine. Strictly specific for ribonucleosides. This chain is Pyrimidine-specific ribonucleoside hydrolase RihB, found in Escherichia coli (strain SE11).